Reading from the N-terminus, the 650-residue chain is Secretin OutD (650 aa).

Positions 1-18 are cleaved as a signal peptide; the sequence is MLLLSGSVLLMASSLAWS. The N0 stretch occupies residues 20–115; it reads EFSASFKGTD…LATDRQPGIG (96 aa). The tract at residues 117–181 is N1; it reads EVVTRVVPVN…TIVERVDQTG (65 aa). Residues 182–255 form an N2 region; that stretch reads DRNVTTIPLS…MVKQLDRQQA (74 aa). Residues 258–330 are N3; it reads GNTKVIYLKY…DLEQVIAQLD (73 aa). The secretin stretch occupies residues 335-585; that stretch reads QVLVEAIIAE…LFIRPSIIRD (251 aa). Positions 587–650 are s domain; it reads SQFQSASASK…IVAFYPAGGK (64 aa).

The protein belongs to the bacterial secretin family. GSP D subfamily. In terms of assembly, forms a cylindrical channel with 15 subunits.

The protein resides in the cell outer membrane. Its function is as follows. Involved in a type II secretion system (T2SS, formerly general secretion pathway, GSP) for the export of proteins. Required for the translocation of the multiple pectic enzymes. This subunit forms the outer membrane channel. The sequence is that of Secretin OutD (outD) from Pectobacterium carotovorum subsp. carotovorum (Erwinia carotovora subsp. carotovora).